We begin with the raw amino-acid sequence, 274 residues long: Ribosomal RNA small subunit methyltransferase A (274 aa).

H15, L17, G42, E64, D89, and N108 together coordinate S-adenosyl-L-methionine.

This sequence belongs to the class I-like SAM-binding methyltransferase superfamily. rRNA adenine N(6)-methyltransferase family. RsmA subfamily.

It is found in the cytoplasm. It carries out the reaction adenosine(1518)/adenosine(1519) in 16S rRNA + 4 S-adenosyl-L-methionine = N(6)-dimethyladenosine(1518)/N(6)-dimethyladenosine(1519) in 16S rRNA + 4 S-adenosyl-L-homocysteine + 4 H(+). In terms of biological role, specifically dimethylates two adjacent adenosines (A1518 and A1519) in the loop of a conserved hairpin near the 3'-end of 16S rRNA in the 30S particle. May play a critical role in biogenesis of 30S subunits. The sequence is that of Ribosomal RNA small subunit methyltransferase A from Prochlorococcus marinus (strain MIT 9215).